Consider the following 767-residue polypeptide: MRFFHSIIVLLFSISTGSAFLLYGCNLSENLCDNDESCYPDGVFGQCYSSESGSPEPTVLDNLDDTQLELLKLELTRLAAKDKDWGDEETQCVLAYFKMSMFYQLQYDPDFCQVRKPANVWALIQLIDTGLTEDPTILDEDVNPENVTDEDMAQIIEQLKEPSLPTEEDIEEALNAQNEDVDDEILDQYVQAVVNNENPDFSELSDGQLNILIGRLVDLKKNVENEEAQLLTGDGEQEMAVPLDDLEERGEQAILKKDIEQVGEINQGLDNTEHKIVKGRKDQVVTRVDANRVYLKVHLKNEDQLMPLIEFLQNTIAIPNNLYFDDFQFENGQLSMRISRFEGAKPKADKRIDSVEGVASAVYKRRKDIARLSGADVRETGIGSGEDGSLPVESSERDWLLMPVLFVCAFTVTALGLVAAVQIARSRRHYKDNIQQIAEQLDGKNSFAYQDLCRQRADGGRASKSSSTSSWCEETAVPTIDISTGHVVLNFLQEYLSEPTKIEAQWNGIKDYRNEERTKTKAEKFASQNRTILPFDDNIVDIDGKTAENEDFYLNASFIYDDDPRQAVYIAAQTPASSQIAAFWQTIWQHGVCLVVNLSTPEECKQEKNYWPDTGSEVHGAFEIHLVSEHIWSDDYLVRSFYLKNLQNSQTRTITQFHYLSWQKESTPTSAKSILEFRRKVNKSYRGRSSAVLVHSWDGSGRTGVYCAVDVLCARLLRGIRQIDVVATVEHLRDQRDGMVATGDQFKLVYGCVAQEVNHLLKSIATK.

An N-terminal signal peptide occupies residues 1–19; the sequence is MRFFHSIIVLLFSISTGSA. Over 20 to 398 the chain is Lumenal; that stretch reads FLLYGCNLSE…SLPVESSERD (379 aa). N-linked (GlcNAc...) asparagine glycosylation is found at Asn26 and Asn146. A helical transmembrane segment spans residues 399-419; the sequence is WLLMPVLFVCAFTVTALGLVA. The Cytoplasmic portion of the chain corresponds to 420–767; it reads AVQIARSRRH…NHLLKSIATK (348 aa). One can recognise a Tyrosine-protein phosphatase domain in the interval 527–756; the sequence is SQNRTILPFD…KLVYGCVAQE (230 aa).

Belongs to the protein-tyrosine phosphatase family. Receptor class 8 subfamily. In terms of processing, proteolytically cleaved probably at a dibasic consensus sequence by egl-3. As to expression, in hermaphrodites specifically expressed in neurons and in particular in the head nerve ring (ADE, ALA, ASI, ASK, AUA, ASG, AVH and AVJ neurons), in the ventral nerve cord, pre-anal ganglia (PVP neuron), in the tail (PHA, PHB and PHC neurons) and in vulval motor neurons VC and HSN and the vulval uv1 cells. In males, also expressed in neurons anterior to the nerve ring and male-specific neurons in the tail.

It is found in the cytoplasmic vesicle membrane. The protein resides in the perikaryon. The protein localises to the cell projection. It localises to the axon. Its subcellular location is the dendrite. Its function is as follows. Regulates dense-core vesicle (DCV) trafficking and/or secretion. Probably by controlling DCV trafficking, plays a role in the AVG neuron-mediated formation of the right axon tract of the ventral nerve cord. Involved in locomotion by regulating acetylcholine release. Probably by controlling the secretion of FLP neuropeptides, regulates the turning step of male mating behavior. Plays a role in preventing dauer formation. This chain is Receptor-type tyrosine-protein phosphatase-like ida-1, found in Caenorhabditis elegans.